Reading from the N-terminus, the 73-residue chain is Frenatin 3.1 (73 aa).

The first 22 residues, 1 to 22, serve as a signal peptide directing secretion; the sequence is MHFLKKSIFLVLFLGLVSLSIC. The propeptide occupies 23-46; the sequence is EKEKREDQNEEEVDENEEASEEKR. The disordered stretch occupies residues 25–45; that stretch reads EKREDQNEEEVDENEEASEEK. Residues 30–42 are compositionally biased toward acidic residues; it reads QNEEEVDENEEAS.

Expressed by the skin glands.

The protein resides in the secreted. In terms of biological role, antimicrobial peptide with activity against both Gram-positive and Gram-negative bacteria. This chain is Frenatin 3.1, found in Nyctimystes infrafrenatus (White-lipped tree frog).